Here is a 613-residue protein sequence, read N- to C-terminus: Histone acetyltransferase KAT7 (613 aa).

A disordered region spans residues 1–175 (MAIGVVKRNA…SDLSHRPKRR (175 aa)). A phosphoserine mark is found at Ser-12, Ser-52, Ser-55, Ser-59, and Ser-66. Positions 44–59 (VTRSSARLSQSSQDSS) are enriched in low complexity. 2 positions are modified to phosphothreonine: Thr-87 and Thr-90. The span at 98–107 (QTRSSGSETE) shows a compositional bias: polar residues. Ser-104 carries the phosphoserine modification. At Thr-106 the chain carries Phosphothreonine. The span at 112–127 (FSDRETKNTADHDESP) shows a compositional bias: basic and acidic residues. 2 positions are modified to phosphoserine: Ser-113 and Ser-126. Thr-130 carries the post-translational modification Phosphothreonine. Low complexity predominate over residues 136-147 (PSSESDIDISSP). The span at 150-170 (SHDESIAKDMSLKDSGSDLSH) shows a compositional bias: basic and acidic residues. Phosphoserine occurs at positions 160, 164, 166, and 180. Residues 178-221 (HESYNFNMKCPTPGCNSLGHLTGKHERHFSISGCPLYHNLSADE) form a CCHHC-type zinc finger. N6-acetyllysine occurs at positions 201 and 279. A Glycyl lysine isopeptide (Lys-Gly) (interchain with G-Cter in SUMO2) cross-link involves residue Lys-325. In terms of domain architecture, MYST-type HAT spans 334 to 609 (EGSNMIKTIA…MDPSCLKWTP (276 aa)). Residue Lys-340 forms a Glycyl lysine isopeptide (Lys-Gly) (interchain with G-Cter in ubiquitin) linkage. The segment at 367 to 392 (LYMCEFCLKYMKSQTILRRHMAKCVW) adopts a C2HC MYST-type zinc-finger fold. Zn(2+)-binding residues include Cys-370, Cys-373, His-386, and Cys-390. Lys-434 is modified (N6-acetyllysine; by autocatalysis). Acetyl-CoA is bound by residues 477–479 (ILT) and 485–490 (RQGYGK). Ser-508 is modified (phosphoserine). The active-site Proton donor/acceptor is the Glu-510. Positions 514 and 523 each coordinate acetyl-CoA.

Belongs to the MYST (SAS/MOZ) family. As to quaternary structure, component of the HBO1 complex composed of KAT7/HBO1, MEAF6, ING4 or ING5, and one scaffold subunit: complexes containing BRPF scaffold (BRPF1, BRD1/BRPF2 or BRPF3) direct KAT7/HBO1 specificity towards H3K14ac, while complexes containing JADE scaffold (JADE1, JADE2 and JADE3) mediate acetylation of histone H4. Interacts with MCM2 and ORC1. Interacts with the androgen receptor (AR) in the presence of dihydrotestosterone. Interacts with CDT1. Interacts with MAP2K1 and CUL1. Interacts with p53/TP53; leading to inhibit histone acetyltransferase activity. In terms of processing, phosphorylated at Ser-52 and Ser-55 by ATR in response to DNA damage, promoting its ubiquitination by the CRL4(DDB2) complex and subsequent degradation. Phosphorylation at Ser-52 and Ser-55 by ATR in response to ultraviolet-induced DNA, promotes localization to DNA damage sites. Phosphorylation at Ser-59 by PLK1 during mitosis seems important for prereplicative complex formation and DNA replication licensing, and requires prior phosphorylation at Thr-87 and Thr-90 by CDK1. Phosphorylated by MAP2K1, which accelerates its degradation. Ubiquitinated at Lys-340, leading to proteasomal degradation. Ubiquitinated by the CRL4(DDB2) complex following phosphorylation by ATR, leading to its subsequent degradation. Post-translationally, autoacetylation at Lys-434 is required for proper function. As to expression, widely expressed in adult tissues.

It localises to the nucleus. The protein localises to the chromosome. It is found in the centromere. Its subcellular location is the cytoplasm. The protein resides in the cytosol. The enzyme catalyses L-lysyl-[protein] + acetyl-CoA = N(6)-acetyl-L-lysyl-[protein] + CoA + H(+). With respect to regulation, histone acetyltransferase activity is inhibited by GMNN in the context of a complex with CDT1, inhibiting histone H4 acetylation and DNA replication licensing. Catalytic subunit of histone acetyltransferase HBO1 complexes, which specifically mediate acetylation of histone H3 at 'Lys-14' (H3K14ac), thereby regulating various processes, such as gene transcription, protein ubiquitination, immune regulation, stem cell pluripotent and self-renewal maintenance and embryonic development. Some complexes also catalyze acetylation of histone H4 at 'Lys-5', 'Lys-8' and 'Lys-12' (H4K5ac, H4K8ac and H4K12ac, respectively), regulating DNA replication initiation, regulating DNA replication initiation. Specificity of the HBO1 complexes is determined by the scaffold subunit: complexes containing BRPF scaffold (BRPF1, BRD1/BRPF2 or BRPF3) direct KAT7/HBO1 specificity towards H3K14ac, while complexes containing JADE (JADE1, JADE2 and JADE3) scaffold direct KAT7/HBO1 specificity towards histone H4. H3K14ac promotes transcriptional elongation by facilitating the processivity of RNA polymerase II. Acts as a key regulator of hematopoiesis by forming a complex with BRD1/BRPF2, directing KAT7/HBO1 specificity towards H3K14ac and promoting erythroid differentiation. H3K14ac is also required for T-cell development. KAT7/HBO1-mediated acetylation facilitates two consecutive steps, licensing and activation, in DNA replication initiation: H3K14ac facilitates the activation of replication origins, and histone H4 acetylation (H4K5ac, H4K8ac and H4K12ac) facilitates chromatin loading of MCM complexes, promoting DNA replication licensing. Acts as a positive regulator of centromeric CENPA assembly: recruited to centromeres and mediates histone acetylation, thereby preventing centromere inactivation mediated by SUV39H1, possibly by increasing histone turnover/exchange. Involved in nucleotide excision repair: phosphorylation by ATR in response to ultraviolet irradiation promotes its localization to DNA damage sites, where it mediates histone acetylation to facilitate recruitment of XPC at the damaged DNA sites. Acts as an inhibitor of NF-kappa-B independently of its histone acetyltransferase activity. In terms of biological role, plays a central role in the maintenance of leukemia stem cells in acute myeloid leukemia (AML). Acts by mediating acetylation of histone H3 at 'Lys-14' (H3K14ac), thereby facilitating the processivity of RNA polymerase II to maintain the high expression of key genes, such as HOXA9 and HOXA10 that help to sustain the functional properties of leukemia stem cells. The chain is Histone acetyltransferase KAT7 from Mus musculus (Mouse).